The sequence spans 292 residues: Acetyl-coenzyme A carboxylase carboxyl transferase subunit beta (292 aa).

Residues 23-292 (VWSKCTACGN…TEATEVSVNE (270 aa)) enclose the CoA carboxyltransferase N-terminal domain. The Zn(2+) site is built by Cys-27, Cys-30, Cys-46, and Cys-49. The segment at 27–49 (CTACGNIIYKADLERSLNVCPKC) adopts a C4-type zinc-finger fold.

Belongs to the AccD/PCCB family. As to quaternary structure, acetyl-CoA carboxylase is a heterohexamer composed of biotin carboxyl carrier protein (AccB), biotin carboxylase (AccC) and two subunits each of ACCase subunit alpha (AccA) and ACCase subunit beta (AccD). It depends on Zn(2+) as a cofactor.

It localises to the cytoplasm. It carries out the reaction N(6)-carboxybiotinyl-L-lysyl-[protein] + acetyl-CoA = N(6)-biotinyl-L-lysyl-[protein] + malonyl-CoA. Its pathway is lipid metabolism; malonyl-CoA biosynthesis; malonyl-CoA from acetyl-CoA: step 1/1. Component of the acetyl coenzyme A carboxylase (ACC) complex. Biotin carboxylase (BC) catalyzes the carboxylation of biotin on its carrier protein (BCCP) and then the CO(2) group is transferred by the transcarboxylase to acetyl-CoA to form malonyl-CoA. The protein is Acetyl-coenzyme A carboxylase carboxyl transferase subunit beta of Idiomarina loihiensis (strain ATCC BAA-735 / DSM 15497 / L2-TR).